The following is a 176-amino-acid chain: Inner membrane-spanning protein YciB (176 aa).

Transmembrane regions (helical) follow at residues 24–44 (TATA…AFRH), 49–69 (PMLW…LVLH), 76–96 (WKPT…QLAF), 119–139 (LNVV…FVAY), and 149–169 (FKLF…SLWL).

It belongs to the YciB family.

It is found in the cell inner membrane. Its function is as follows. Plays a role in cell envelope biogenesis, maintenance of cell envelope integrity and membrane homeostasis. This Paraburkholderia xenovorans (strain LB400) protein is Inner membrane-spanning protein YciB.